The primary structure comprises 228 residues: 2,3-bisphosphoglycerate-dependent phosphoglycerate mutase (228 aa).

Residues 8–15 (RHGQSEWN), 21–22 (TG), Arg-60, 87–90 (ERHY), Lys-98, 114–115 (RR), and 180–181 (GN) contribute to the substrate site. His-9 functions as the Tele-phosphohistidine intermediate in the catalytic mechanism. Glu-87 serves as the catalytic Proton donor/acceptor.

It belongs to the phosphoglycerate mutase family. BPG-dependent PGAM subfamily. In terms of assembly, homodimer.

The enzyme catalyses (2R)-2-phosphoglycerate = (2R)-3-phosphoglycerate. It participates in carbohydrate degradation; glycolysis; pyruvate from D-glyceraldehyde 3-phosphate: step 3/5. Its function is as follows. Catalyzes the interconversion of 2-phosphoglycerate and 3-phosphoglycerate. This is 2,3-bisphosphoglycerate-dependent phosphoglycerate mutase from Zymomonas mobilis subsp. mobilis (strain ATCC 31821 / ZM4 / CP4).